The chain runs to 739 residues: UPF0313 protein YgiQ (739 aa).

The 279-residue stretch at 372-650 folds into the Radical SAM core domain; that stretch reads AYEMIRFSVN…KALLRYHDPA (279 aa). [4Fe-4S] cluster contacts are provided by Cys386, Cys390, and Cys393. Residues 685–739 are disordered; the sequence is REARRQNRNTRPALTKHTPMATQRQTPATAKKASSTQSRPVNAGAKKRPKAAVGR. Residues 704 to 724 show a composition bias toward polar residues; it reads MATQRQTPATAKKASSTQSRP. A compositionally biased stretch (basic residues) spans 729 to 739; it reads AKKRPKAAVGR.

Belongs to the UPF0313 family. [4Fe-4S] cluster serves as cofactor.

In Escherichia coli (strain K12), this protein is UPF0313 protein YgiQ (ygiQ).